The primary structure comprises 589 residues: uncharacterized protein (589 aa).

14 consecutive transmembrane segments (helical) span residues 90–110 (YIVIPGLMLSIFLAALDQTVI), 128–148 (SWIGTAYSLAETSILPFCGIM), 162–182 (IVLFLFGSAMCGAAQNMLWLV), 189–209 (GIGGGGIMSLVTIVIADITPL), 217–237 (GCMGVTWGVASVMGPLIGGAI), 245–265 (WIFFINLPTGGLSLALLIFFL), 284–304 (FVGIVTITTGVVLFLLGLNIG), 311–331 (AHANVLCYLIFGILCIAGFVV), 355–375 (VMVTSFLHYYIMSTVTYYIPI), 390–410 (VHTLSLAVVSSVVSAISGMGI), 418–438 (YPMIGGWIVLLAGTGSMIAIY), 448–468 (GFLALTAVGIGNLFQPNLIAI), 483–503 (AFMLLRNMGASVGISIGAVIY), and 545–565 (IRTIWIVNCPVAGVGMLLSFF).

Belongs to the major facilitator superfamily. TCR/Tet family.

The protein resides in the membrane. This is an uncharacterized protein from Schizosaccharomyces pombe (strain 972 / ATCC 24843) (Fission yeast).